The sequence spans 307 residues: NmrA-like family domain-containing oxidoreductase flvB (307 aa).

NADP(+) contacts are provided by residues 4-9 (LITGAT), 32-36 (SSSSP), 53-54 (DY), 74-76 (STN), and 148-151 (YVEG).

This sequence belongs to the NmrA-type oxidoreductase family.

It catalyses the reaction (2S)-5,5-dimethyl-2,3,4,5-tetrahydropyridine-2,6-dicarboxylate + NADPH + 2 H(+) = (6S)-3,3-dimethylpiperidine-2,6-dicarboxylate + NADP(+). It carries out the reaction (2S)-5,5-dimethyl-2,3,4,5-tetrahydropyridine-2,6-dicarboxylate + NADH + 2 H(+) = (6S)-3,3-dimethylpiperidine-2,6-dicarboxylate + NAD(+). It participates in secondary metabolite biosynthesis; terpenoid biosynthesis. NmrA-like family domain-containing oxidoreductase; part of the gene cluster that mediates the biosynthesis of flavunoidine, an alkaloidal terpenoid with a tetracyclic cage-like core connected to dimethylcadaverine via a C-N bond and acylated with 5,5-dimethyl-L-pipecolate. The tetracyclic core is synthesized by the terpene cyclase flvE and the cytochrome P450 monooxygenase flvD. The terpene cyclase flvE catalyzes the cyclization of farnesyl pyrophosphate (FPP) to form (1R,4R,5S)-(+)-acoradiene and the cytochrome P450 monooxygenase flvD is then responsible for oxidative conversion of (1R,4R,5S)-(+)-acoradiene into the tetracyclic cage present in the final product flavunoidine. In parallel, the N-methyltransferase flvH dimethylates L-lysine to give N,N-dimethyl-L-Lysin which is decarboxylated by flvG to afford dimethylcadaverine. The terpene cyclase-like protein flvF is the enzyme that attaches the dimethylcadaverine precusor at the C-7 of the tetracyclic cage to yield pre-flavunoidine. The cytochrome monooxygenase flvC hydroxylates the C-10 position of pre-flavunoidine whereas the NRPS flvI acylates the terpenoid core at the hydroxylated C-10 with dimethylpipecolate to yield final flavunoidine. The bifunctional enzyme flvA and the dehydrogenase flvB are responsible for the synthesis of the dimethylpipecolate precursor. The PLP-dependent lyase domain of flvA might use L-O-acetyl-homoserine and alpha-keto-isovalerate to form an intermediary ketone that can cyclize intramolecularly to yield an imine. The imine can be reduced by flvB to yield the 6-carboxylated pipecolate. The C-terminal alpha-KG-dependent oxygenase domain of flvA is then proposed to catalyze the decarboxylation to yield dimethylpipecolate. This Aspergillus flavus (strain ATCC 200026 / FGSC A1120 / IAM 13836 / NRRL 3357 / JCM 12722 / SRRC 167) protein is NmrA-like family domain-containing oxidoreductase flvB.